Here is a 56-residue protein sequence, read N- to C-terminus: Large ribosomal subunit protein bL33 (56 aa).

Residues 1–12 are compositionally biased toward basic and acidic residues; sequence MASKGGREKIKL. The tract at residues 1–27 is disordered; sequence MASKGGREKIKLESTAGTGHFYTTNKN.

Belongs to the bacterial ribosomal protein bL33 family.

The protein is Large ribosomal subunit protein bL33 of Leptothrix cholodnii (strain ATCC 51168 / LMG 8142 / SP-6) (Leptothrix discophora (strain SP-6)).